Here is a 1252-residue protein sequence, read N- to C-terminus: DNA-directed RNA polymerase subunit beta (1252 aa).

The protein belongs to the RNA polymerase beta chain family. The RNAP catalytic core consists of 2 alpha, 1 beta, 1 beta' and 1 omega subunit. When a sigma factor is associated with the core the holoenzyme is formed, which can initiate transcription.

The catalysed reaction is RNA(n) + a ribonucleoside 5'-triphosphate = RNA(n+1) + diphosphate. Its function is as follows. DNA-dependent RNA polymerase catalyzes the transcription of DNA into RNA using the four ribonucleoside triphosphates as substrates. This chain is DNA-directed RNA polymerase subunit beta, found in Chlamydia muridarum (strain MoPn / Nigg).